We begin with the raw amino-acid sequence, 474 residues long: L-arabinose isomerase (474 aa).

Residues Glu-306, Glu-331, His-348, and His-447 each contribute to the Mn(2+) site.

It belongs to the arabinose isomerase family. Mn(2+) serves as cofactor.

The enzyme catalyses beta-L-arabinopyranose = L-ribulose. The protein operates within carbohydrate degradation; L-arabinose degradation via L-ribulose; D-xylulose 5-phosphate from L-arabinose (bacterial route): step 1/3. Catalyzes the conversion of L-arabinose to L-ribulose. This Oceanobacillus iheyensis (strain DSM 14371 / CIP 107618 / JCM 11309 / KCTC 3954 / HTE831) protein is L-arabinose isomerase.